A 273-amino-acid polypeptide reads, in one-letter code: Urease accessory protein UreD (273 aa).

Belongs to the UreD family. As to quaternary structure, ureD, UreF and UreG form a complex that acts as a GTP-hydrolysis-dependent molecular chaperone, activating the urease apoprotein by helping to assemble the nickel containing metallocenter of UreC. The UreE protein probably delivers the nickel.

Its subcellular location is the cytoplasm. In terms of biological role, required for maturation of urease via the functional incorporation of the urease nickel metallocenter. This Mycolicibacterium gilvum (strain PYR-GCK) (Mycobacterium gilvum (strain PYR-GCK)) protein is Urease accessory protein UreD.